A 112-amino-acid chain; its full sequence is 2Fe-2S ferredoxin (112 aa).

The 104-residue stretch at 1-104 folds into the 2Fe-2S ferredoxin-type domain; sequence MPQIVILPHA…DLVVEIPKYT (104 aa). Positions 42, 48, 51, and 87 each coordinate [2Fe-2S] cluster.

It belongs to the adrenodoxin/putidaredoxin family. [2Fe-2S] cluster serves as cofactor.

In terms of biological role, ferredoxin are iron-sulfur proteins that transfer electrons in a wide variety of metabolic reactions. The polypeptide is 2Fe-2S ferredoxin (fdx) (Pseudomonas aeruginosa (strain ATCC 15692 / DSM 22644 / CIP 104116 / JCM 14847 / LMG 12228 / 1C / PRS 101 / PAO1)).